The primary structure comprises 1645 residues: Protein MON2 homolog (1645 aa).

This sequence belongs to the MON2 family.

Its function is as follows. May be required for traffic between late Golgi and early endosomes. The protein is Protein MON2 homolog of Caenorhabditis briggsae.